A 505-amino-acid polypeptide reads, in one-letter code: Tyrosine-protein kinase Blk (505 aa).

A disordered region spans residues 1–37 (MGLVSSKKPDKEKPIKEKDKGQWSPLKVSAQDKDAPP). Residue Gly2 is the site of N-myristoyl glycine attachment. Residues 7–21 (KKPDKEKPIKEKDKG) show a composition bias toward basic and acidic residues. The 61-residue stretch at 58 to 118 (EDKHFVVALY…PSNFVARVES (61 aa)) folds into the SH3 domain. The SH2 domain maps to 124–220 (WFFRSQGRKE…GLCQRLTLPC (97 aa)). In terms of domain architecture, Protein kinase spans 241–494 (LRLVRKLGSG…FLQSVLEDFY (254 aa)). Residues 247-255 (LGSGQFGEV) and Lys269 each bind ATP. Asp360 (proton acceptor) is an active-site residue. A Phosphotyrosine; by autocatalysis modification is found at Tyr389.

This sequence belongs to the protein kinase superfamily. Tyr protein kinase family. SRC subfamily. In terms of assembly, interacts with CBL (via SH2 domain). Interacts with CD79A and CD79B (via SH2 domain). Phosphorylated on tyrosine residues after antibody-mediated surface engagement of the B-cell antigen receptor (BCR). Post-translationally, ubiquitination of activated BLK by the UBE3A ubiquitin protein ligase leads to its degradation by the ubiquitin-proteasome pathway. Expressed in lymphatic organs, pancreatic islets, Leydig cells, striate ducts of salivary glands and hair follicles.

Its subcellular location is the cell membrane. It carries out the reaction L-tyrosyl-[protein] + ATP = O-phospho-L-tyrosyl-[protein] + ADP + H(+). Its activity is regulated as follows. Antibody-mediated surface engagement of the B-cell antigen receptor (BCR) which results in the phosphorylation of BLK on tyrosine residues, stimulates the enzymatic activity. Non-receptor tyrosine kinase involved in B-lymphocyte development, differentiation and signaling. B-cell receptor (BCR) signaling requires a tight regulation of several protein tyrosine kinases and phosphatases, and associated coreceptors. Binding of antigen to the B-cell antigen receptor (BCR) triggers signaling that ultimately leads to B-cell activation. Signaling through BLK plays an important role in transmitting signals through surface immunoglobulins and supports the pro-B to pre-B transition, as well as the signaling for growth arrest and apoptosis downstream of B-cell receptor. Specifically binds and phosphorylates CD79A at 'Tyr-188'and 'Tyr-199', as well as CD79B at 'Tyr-196' and 'Tyr-207'. Also phosphorylates the immunoglobulin G receptors FCGR2A, FCGR2B and FCGR2C. With FYN and LYN, plays an essential role in pre-B-cell receptor (pre-BCR)-mediated NF-kappa-B activation. Also contributes to BTK activation by indirectly stimulating BTK intramolecular autophosphorylation. In pancreatic islets, acts as a modulator of beta-cells function through the up-regulation of PDX1 and NKX6-1 and consequent stimulation of insulin secretion in response to glucose. Phosphorylates CGAS, promoting retention of CGAS in the cytosol. In Homo sapiens (Human), this protein is Tyrosine-protein kinase Blk (BLK).